Consider the following 139-residue polypeptide: UPF0216 protein MJ1224 (139 aa).

The protein belongs to the UPF0216 family.

The polypeptide is UPF0216 protein MJ1224 (Methanocaldococcus jannaschii (strain ATCC 43067 / DSM 2661 / JAL-1 / JCM 10045 / NBRC 100440) (Methanococcus jannaschii)).